Here is a 340-residue protein sequence, read N- to C-terminus: UDP-3-O-acylglucosamine N-acyltransferase (340 aa).

His238 (proton acceptor) is an active-site residue.

Belongs to the transferase hexapeptide repeat family. LpxD subfamily. Homotrimer.

The catalysed reaction is a UDP-3-O-[(3R)-3-hydroxyacyl]-alpha-D-glucosamine + a (3R)-hydroxyacyl-[ACP] = a UDP-2-N,3-O-bis[(3R)-3-hydroxyacyl]-alpha-D-glucosamine + holo-[ACP] + H(+). It functions in the pathway bacterial outer membrane biogenesis; LPS lipid A biosynthesis. Catalyzes the N-acylation of UDP-3-O-acylglucosamine using 3-hydroxyacyl-ACP as the acyl donor. Is involved in the biosynthesis of lipid A, a phosphorylated glycolipid that anchors the lipopolysaccharide to the outer membrane of the cell. In Psychromonas ingrahamii (strain DSM 17664 / CCUG 51855 / 37), this protein is UDP-3-O-acylglucosamine N-acyltransferase.